The primary structure comprises 248 residues: Ubiquinone biosynthesis O-methyltransferase (248 aa).

The S-adenosyl-L-methionine site is built by Arg41, Gly72, Asp93, and Met136.

It belongs to the methyltransferase superfamily. UbiG/COQ3 family.

It catalyses the reaction a 3-demethylubiquinol + S-adenosyl-L-methionine = a ubiquinol + S-adenosyl-L-homocysteine + H(+). It carries out the reaction a 3-(all-trans-polyprenyl)benzene-1,2-diol + S-adenosyl-L-methionine = a 2-methoxy-6-(all-trans-polyprenyl)phenol + S-adenosyl-L-homocysteine + H(+). It functions in the pathway cofactor biosynthesis; ubiquinone biosynthesis. In terms of biological role, O-methyltransferase that catalyzes the 2 O-methylation steps in the ubiquinone biosynthetic pathway. The chain is Ubiquinone biosynthesis O-methyltransferase from Brucella anthropi (strain ATCC 49188 / DSM 6882 / CCUG 24695 / JCM 21032 / LMG 3331 / NBRC 15819 / NCTC 12168 / Alc 37) (Ochrobactrum anthropi).